Here is a 1358-residue protein sequence, read N- to C-terminus: Xanthine dehydrogenase/oxidase (1358 aa).

The 2Fe-2S ferredoxin-type domain occupies 8-95 (DELVFFVNGK…HVAVTTVEGI (88 aa)). [2Fe-2S] cluster-binding residues include cysteine 47, cysteine 52, cysteine 55, cysteine 77, cysteine 117, cysteine 120, cysteine 152, and cysteine 154. In terms of domain architecture, FAD-binding PCMH-type spans 255–440 (FKGERVMWIQ…LSVEIPYSKE (186 aa)). FAD-binding positions include 283 to 290 (LVVGNTEV), phenylalanine 363, 373 to 377 (ALGGN), aspartate 386, leucine 430, and lysine 448. The Mo-molybdopterin site is built by glutamine 796 and phenylalanine 827. Residues glutamate 831 and arginine 909 each coordinate substrate. Mo-molybdopterin is bound at residue arginine 941. Substrate is bound by residues phenylalanine 943 and threonine 1039. Residue alanine 1108 coordinates Mo-molybdopterin. Catalysis depends on glutamate 1290, which acts as the Proton acceptor.

The protein belongs to the xanthine dehydrogenase family. In terms of assembly, homodimer. FAD serves as cofactor. Requires Mo-molybdopterin as cofactor. The cofactor is [2Fe-2S] cluster. As to expression, detected in liver (at protein level).

The protein localises to the peroxisome. It is found in the cytoplasm. It catalyses the reaction xanthine + NAD(+) + H2O = urate + NADH + H(+). The enzyme catalyses hypoxanthine + NAD(+) + H2O = xanthine + NADH + H(+). It carries out the reaction xanthine + O2 + H2O = urate + H2O2. Functionally, key enzyme in purine degradation. Catalyzes the oxidation of hypoxanthine to xanthine. Catalyzes the oxidation of xanthine to uric acid. Contributes to the generation of reactive oxygen species. This Gallus gallus (Chicken) protein is Xanthine dehydrogenase/oxidase (XDH).